The primary structure comprises 177 residues: RNA pyrophosphohydrolase (177 aa).

The Nudix hydrolase domain maps to 6–149 (GYRPNVGIVI…KRDVYRRVMK (144 aa)). The Nudix box signature appears at 38–59 (GGINPGESPEQAMYRELFEEVG).

The protein belongs to the Nudix hydrolase family. RppH subfamily. It depends on a divalent metal cation as a cofactor.

In terms of biological role, accelerates the degradation of transcripts by removing pyrophosphate from the 5'-end of triphosphorylated RNA, leading to a more labile monophosphorylated state that can stimulate subsequent ribonuclease cleavage. This chain is RNA pyrophosphohydrolase, found in Pectobacterium atrosepticum (strain SCRI 1043 / ATCC BAA-672) (Erwinia carotovora subsp. atroseptica).